Consider the following 435-residue polypeptide: Cyclin-dependent kinase 14 (435 aa).

Positions 75–92 (RTQSSFDPFEKTSNQPTS) are enriched in polar residues. The disordered stretch occupies residues 75-97 (RTQSSFDPFEKTSNQPTSPKFGK). Positions 101–385 (YEKLEKLGEG…AQAALNHDYF (285 aa)) constitute a Protein kinase domain. Residues 107 to 115 (LGEGSYATV) and Lys-130 contribute to the ATP site. The active-site Proton acceptor is Asp-222.

It belongs to the protein kinase superfamily. CMGC Ser/Thr protein kinase family. CDC2/CDKX subfamily. Interacts with ccny; ccny mediates its recruitment to the plasma membrane and promotes phosphorylation of lrp6.

The protein localises to the cell membrane. It catalyses the reaction L-seryl-[protein] + ATP = O-phospho-L-seryl-[protein] + ADP + H(+). It carries out the reaction L-threonyl-[protein] + ATP = O-phospho-L-threonyl-[protein] + ADP + H(+). Serine/threonine-protein kinase involved in the control of the eukaryotic cell cycle, whose activity is controlled by an associated cyclin. Acts as a cell-cycle regulator of Wnt signaling pathway during G2/M phase by mediating the phosphorylation of lrp6, leading to the activation of the Wnt signaling pathway. The chain is Cyclin-dependent kinase 14 (cdk14) from Xenopus laevis (African clawed frog).